A 138-amino-acid chain; its full sequence is F-box protein At4g12382 (138 aa).

The F-box domain occupies 7–53; sequence NPSFADLPSSLIEVIMSHLALKNNIRASAACKSWYEVGVSVRVVEKH.

The chain is F-box protein At4g12382 from Arabidopsis thaliana (Mouse-ear cress).